The sequence spans 195 residues: Peptidyl-tRNA hydrolase (195 aa).

Y18 is a binding site for tRNA. H23 serves as the catalytic Proton acceptor. The tRNA site is built by Y69, N71, and N117.

Belongs to the PTH family. As to quaternary structure, monomer.

It localises to the cytoplasm. The catalysed reaction is an N-acyl-L-alpha-aminoacyl-tRNA + H2O = an N-acyl-L-amino acid + a tRNA + H(+). Functionally, hydrolyzes ribosome-free peptidyl-tRNAs (with 1 or more amino acids incorporated), which drop off the ribosome during protein synthesis, or as a result of ribosome stalling. In terms of biological role, catalyzes the release of premature peptidyl moieties from peptidyl-tRNA molecules trapped in stalled 50S ribosomal subunits, and thus maintains levels of free tRNAs and 50S ribosomes. This is Peptidyl-tRNA hydrolase from Nitrosomonas eutropha (strain DSM 101675 / C91 / Nm57).